The following is a 208-amino-acid chain: Large ribosomal subunit protein uL4 (208 aa).

Residues Arg45–His95 form a disordered region. Residues Gly69–Ser80 are compositionally biased toward polar residues.

It belongs to the universal ribosomal protein uL4 family. As to quaternary structure, part of the 50S ribosomal subunit.

In terms of biological role, one of the primary rRNA binding proteins, this protein initially binds near the 5'-end of the 23S rRNA. It is important during the early stages of 50S assembly. It makes multiple contacts with different domains of the 23S rRNA in the assembled 50S subunit and ribosome. Forms part of the polypeptide exit tunnel. The polypeptide is Large ribosomal subunit protein uL4 (Chlorobium chlorochromatii (strain CaD3)).